The primary structure comprises 449 residues: Tubulin beta-5 chain (449 aa).

GTP-binding residues include Q11, E70, S139, G143, T144, G145, N205, and N227. E70 contacts Mg(2+). The tract at residues 427 to 449 (QDATADEEGEYDVEEEEEGDYET) is disordered. Residues 430-449 (TADEEGEYDVEEEEEGDYET) are compositionally biased toward acidic residues.

This sequence belongs to the tubulin family. As to quaternary structure, dimer of alpha and beta chains. A typical microtubule is a hollow water-filled tube with an outer diameter of 25 nm and an inner diameter of 15 nM. Alpha-beta heterodimers associate head-to-tail to form protofilaments running lengthwise along the microtubule wall with the beta-tubulin subunit facing the microtubule plus end conferring a structural polarity. Microtubules usually have 13 protofilaments but different protofilament numbers can be found in some organisms and specialized cells. The cofactor is Mg(2+).

It localises to the cytoplasm. The protein resides in the cytoskeleton. Its function is as follows. Tubulin is the major constituent of microtubules, a cylinder consisting of laterally associated linear protofilaments composed of alpha- and beta-tubulin heterodimers. Microtubules grow by the addition of GTP-tubulin dimers to the microtubule end, where a stabilizing cap forms. Below the cap, tubulin dimers are in GDP-bound state, owing to GTPase activity of alpha-tubulin. The polypeptide is Tubulin beta-5 chain (TUBB5) (Arabidopsis thaliana (Mouse-ear cress)).